We begin with the raw amino-acid sequence, 199 residues long: Prolactin-2 (199 aa).

Disulfide bonds link C4/C11, C58/C174, and C191/C199.

It belongs to the somatotropin/prolactin family.

Its subcellular location is the secreted. This chain is Prolactin-2, found in Crocodylus novaeguineae (Crocodile).